The sequence spans 246 residues: Homeobox protein Hox-B4a (246 aa).

The tract at residues 23-125 (YSQSDYLPSH…SQNTSTVSSR (103 aa)) is disordered. 2 stretches are compositionally biased toward polar residues: residues 39-48 (AQRQDPSFQH) and 112-123 (QTPTSQNTSTVS). Residues 130–135 (VYPWMK) carry the Antp-type hexapeptide motif. The segment at residues 151–210 (PKRSRTAYTRQQVLELEKEFHYNRYLTRRRRVEIAHTLCLSERQIKIWFQNRRMKWKKDH) is a DNA-binding region (homeobox). The tract at residues 210 to 246 (HKLPNTKIRSNSASTNSSGCPTLCSNQSRASGPPPSL) is disordered. A compositionally biased stretch (polar residues) spans 216-239 (KIRSNSASTNSSGCPTLCSNQSRA).

This sequence belongs to the Antp homeobox family. Deformed subfamily.

Its subcellular location is the nucleus. Sequence-specific transcription factor which is part of a developmental regulatory system that provides cells with specific positional identities on the anterior-posterior axis. The sequence is that of Homeobox protein Hox-B4a (hoxb4a) from Danio rerio (Zebrafish).